A 415-amino-acid polypeptide reads, in one-letter code: Multifunctional CCA protein (415 aa).

2 residues coordinate ATP: G8 and R11. Positions 8 and 11 each coordinate CTP. Mg(2+) is bound by residues D21 and D23. 3 residues coordinate ATP: R91, R143, and R146. The CTP site is built by R91, R143, and R146. In terms of domain architecture, HD spans 232-333 (TGVHVMMVID…TRLLERCDAL (102 aa)).

It belongs to the tRNA nucleotidyltransferase/poly(A) polymerase family. Bacterial CCA-adding enzyme type 1 subfamily. As to quaternary structure, monomer. Can also form homodimers and oligomers. The cofactor is Mg(2+). It depends on Ni(2+) as a cofactor.

The catalysed reaction is a tRNA precursor + 2 CTP + ATP = a tRNA with a 3' CCA end + 3 diphosphate. It catalyses the reaction a tRNA with a 3' CCA end + 2 CTP + ATP = a tRNA with a 3' CCACCA end + 3 diphosphate. In terms of biological role, catalyzes the addition and repair of the essential 3'-terminal CCA sequence in tRNAs without using a nucleic acid template. Adds these three nucleotides in the order of C, C, and A to the tRNA nucleotide-73, using CTP and ATP as substrates and producing inorganic pyrophosphate. tRNA 3'-terminal CCA addition is required both for tRNA processing and repair. Also involved in tRNA surveillance by mediating tandem CCA addition to generate a CCACCA at the 3' terminus of unstable tRNAs. While stable tRNAs receive only 3'-terminal CCA, unstable tRNAs are marked with CCACCA and rapidly degraded. This chain is Multifunctional CCA protein, found in Cupriavidus pinatubonensis (strain JMP 134 / LMG 1197) (Cupriavidus necator (strain JMP 134)).